The following is a 328-amino-acid chain: Malate dehydrogenase (328 aa).

G16 to S22 provides a ligand contact to NAD(+). Substrate contacts are provided by R97 and R103. NAD(+) contacts are provided by residues N110, Q117, and V134–N136. Substrate contacts are provided by N136 and R167. H192 serves as the catalytic Proton acceptor.

It belongs to the LDH/MDH superfamily. MDH type 2 family.

It carries out the reaction (S)-malate + NAD(+) = oxaloacetate + NADH + H(+). Its function is as follows. Catalyzes the reversible oxidation of malate to oxaloacetate. This is Malate dehydrogenase from Corynebacterium glutamicum (strain R).